Here is a 187-residue protein sequence, read N- to C-terminus: Cell division protein SepF (187 aa).

Positions 21-97 (EVEVPDKQQQ…ATPNNASQES (77 aa)) are disordered. Composition is skewed to polar residues over residues 38–63 (EQSQ…YTTT) and 70–97 (RMSN…SQES).

The protein belongs to the SepF family. Homodimer. Interacts with FtsZ.

The protein resides in the cytoplasm. In terms of biological role, cell division protein that is part of the divisome complex and is recruited early to the Z-ring. Probably stimulates Z-ring formation, perhaps through the cross-linking of FtsZ protofilaments. Its function overlaps with FtsA. This is Cell division protein SepF from Staphylococcus aureus (strain MRSA252).